The sequence spans 362 residues: Porin Omp2b (362 aa).

Residues 1–22 form the signal peptide; it reads MNIKSLLLGSAAALVAASGAQA.

The protein belongs to the alphaproteobacteria porin family. Homotrimer.

Its subcellular location is the cell outer membrane. Its function is as follows. Forms passive diffusion pores that allow small molecular weight hydrophilic materials across the outer membrane. The polypeptide is Porin Omp2b (omp2b) (Brucella suis biovar 1 (strain 1330)).